A 658-amino-acid chain; its full sequence is DNA-binding protein Rfx5 (658 aa).

A compositionally biased stretch (basic and acidic residues) spans 1-10 (MAEDKPDAKS). The disordered stretch occupies residues 1–28 (MAEDKPDAKSPKTGARPQGGADAGEPTT). Ala-2 bears the N-acetylalanine mark. At Ser-10 the chain carries Phosphoserine. An N-terminal domain region spans residues 24 to 89 (GEPTTLLQRL…PSLLSNEEYM (66 aa)). Positions 61–65 (LYLYL) are leucine-rich region; critical for dimer formation and for interaction with RFXAP. A DNA-binding region (RFX-type winged-helix) is located at residues 91 to 167 (AYRWIRNHLE…YCYSGIRRKT (77 aa)). The PxLPxI/L motif; mediates interaction with RFXANK signature appears at 172–177 (PPLPGL). Residue Ser-184 is modified to Phosphoserine. Disordered stretches follow at residues 250 to 315 (LAEE…SSVP), 382 to 422 (AGPG…GLGA), 443 to 602 (VPPR…DKIP), and 624 to 658 (KGEA…ATPP). Over residues 277–309 (GPKKPERPAQPPKEQEARAGTDLPGRAERKKSV) the composition is skewed to basic and acidic residues. 2 stretches are compositionally biased toward gly residues: residues 382–398 (AGPG…GPGP) and 406–422 (PGLG…GLGA). Composition is skewed to basic and acidic residues over residues 465–476 (PRPHDKGIKRTA) and 489–498 (PVKEMKHETQ). Residues 506-516 (KRKRGRPRKKP) show a composition bias toward basic residues. The span at 648-658 (PEHKDPKATPP) shows a compositional bias: basic and acidic residues.

It belongs to the RFX family. As to quaternary structure, homodimer. The RFX heterotetrameric complex consists of 2 molecules of RFX5 and one each of RFXAP and RFX-B/RFXANK; with each subunit representing a separate complementation group. Interacts (via PxLPxI/L motif) with RFXANK (via ankyrin repeats); the interaction is direct. RFX forms cooperative DNA binding complexes with X2BP and CBF/NF-Y. RFX associates with CIITA to form an active transcriptional complex. In terms of processing, phosphorylated.

The protein resides in the nucleus. Activates transcription from class II MHC promoters. Recognizes X-boxes. Mediates cooperative binding between RFX and NF-Y. RFX binds the X1 box of MHC-II promoters. The protein is DNA-binding protein Rfx5 (Rfx5) of Mus musculus (Mouse).